The primary structure comprises 319 residues: Cobalamin biosynthesis protein CbiB (319 aa).

The next 5 membrane-spanning stretches (helical) occupy residues 56–76 (VMWV…LALA), 82–102 (WFGW…RSLA), 153–173 (VDGI…LAMA), 204–224 (VANY…AGLC), and 296–316 (LMWV…CGLS).

It belongs to the CobD/CbiB family.

The protein localises to the cell membrane. Its pathway is cofactor biosynthesis; adenosylcobalamin biosynthesis. Functionally, converts cobyric acid to cobinamide by the addition of aminopropanol on the F carboxylic group. However, the true cosubstrate could be (R)-1-amino-2-propanol O-2-phosphate, leading to cobinamide phosphate. The sequence is that of Cobalamin biosynthesis protein CbiB from Salmonella choleraesuis (strain SC-B67).